The primary structure comprises 35 residues: Small toxic polypeptide LdrA (35 aa).

The helical transmembrane segment at 8–28 (MIFWHDLAAPILAGIITAAIV) threads the bilayer.

This sequence belongs to the Ldr toxic peptide family.

The protein localises to the cell inner membrane. In terms of biological role, toxic component of a type I toxin-antitoxin (TA) system. Inhibits ATP synthesis possibly due to its insertion in the cell inner membrane, ATP levels drop over 50% 2 minutes after induction. Overexpression is toxic leading to cell death, it inhibits cell growth within 30 minutes; C-terminally tagged versions of the protein are toxic while N-terminally tagged versions are not. The chain is Small toxic polypeptide LdrA (ldrA) from Escherichia coli (strain K12).